A 417-amino-acid chain; its full sequence is Putative F-box protein At3g58950 (417 aa).

The region spanning 1–53 (MDLFSSLPDEVLCHILSFLTTKEAALASVVSKRWRNQFALVPNLDIDEEGKRE) is the F-box domain.

This chain is Putative F-box protein At3g58950, found in Arabidopsis thaliana (Mouse-ear cress).